The following is a 398-amino-acid chain: Endoglucanase (398 aa).

Residues 1–23 form the signal peptide; that stretch reads MSPLKCMALAALGAVMFVGSAQA. The active-site Proton donor is glutamate 58. Aspartate 119 (nucleophile) is an active-site residue.

It belongs to the glycosyl hydrolase 8 (cellulase D) family.

Its subcellular location is the secreted. The enzyme catalyses Endohydrolysis of (1-&gt;4)-beta-D-glucosidic linkages in cellulose, lichenin and cereal beta-D-glucans.. The protein operates within glycan metabolism; bacterial cellulose biosynthesis. In terms of biological role, hydrolyzes carboxymethylcellulose. This chain is Endoglucanase (bcsZ), found in Pseudomonas fluorescens (strain SBW25).